The chain runs to 143 residues: Polyadenylate-binding protein-interacting protein 2 (143 aa).

Positions 11–21 (TLNPNAPVFDP) match the PAM2-like motif.

This chain is Polyadenylate-binding protein-interacting protein 2 (CID2), found in Arabidopsis thaliana (Mouse-ear cress).